The sequence spans 805 residues: FAD-dependent monooxygenase verC1 (805 aa).

The first 20 residues, Met1–Ala20, serve as a signal peptide directing secretion. Glu32, Ala46, and Arg107 together coordinate FAD. Asn132 carries an N-linked (GlcNAc...) asparagine glycan. Residue Tyr214 is part of the active site. Residues Asp306 and Ala319 each coordinate FAD. Helical transmembrane passes span Ala551–Gly571, Ile604–Trp624, Ser632–Ser652, Leu671–Trp691, Val703–Ile723, Trp726–Leu746, and Ile761–Leu781.

Belongs to the paxM FAD-dependent monooxygenase family.

Its subcellular location is the membrane. It participates in secondary metabolite biosynthesis; terpenoid biosynthesis. Its pathway is mycotoxin biosynthesis. In terms of biological role, FAD-dependent monooxygenase; part of the gene cluster that mediates the biosynthesis of the neurotoxin verrucosidin, a methylated alpha-pyrone polyketide that inhibits oxidative phosphorylation in mitochondria and thereby causes neurological diseases. The carbon backbone of verrucosidin is synthesized by the HR-PKS verA, and further modified by the other verrucodidin cluster enzymes. The polypeptide is FAD-dependent monooxygenase verC1 (Penicillium polonicum).